A 317-amino-acid polypeptide reads, in one-letter code: Transaldolase (317 aa).

Catalysis depends on K132, which acts as the Schiff-base intermediate with substrate.

It belongs to the transaldolase family. Type 1 subfamily. Homodimer.

Its subcellular location is the cytoplasm. It catalyses the reaction D-sedoheptulose 7-phosphate + D-glyceraldehyde 3-phosphate = D-erythrose 4-phosphate + beta-D-fructose 6-phosphate. It participates in carbohydrate degradation; pentose phosphate pathway; D-glyceraldehyde 3-phosphate and beta-D-fructose 6-phosphate from D-ribose 5-phosphate and D-xylulose 5-phosphate (non-oxidative stage): step 2/3. Functionally, transaldolase is important for the balance of metabolites in the pentose-phosphate pathway. The polypeptide is Transaldolase (Yersinia pseudotuberculosis serotype O:3 (strain YPIII)).